Here is a 381-residue protein sequence, read N- to C-terminus: Cytochrome b (381 aa).

Helical transmembrane passes span 33-53 (FGSL…FLAM), 77-98 (WLIR…FLHV), 113-133 (WNIG…GYVL), and 178-198 (FFAL…VHLT). Heme b-binding residues include histidine 83 and histidine 97. Histidine 182 and histidine 196 together coordinate heme b. Histidine 201 serves as a coordination point for a ubiquinone. 4 consecutive transmembrane segments (helical) span residues 226–246 (IKDI…ALFS), 288–308 (LGGV…PFLH), 320–340 (ISQT…WIGG), and 347–367 (FIII…HPMP).

This sequence belongs to the cytochrome b family. In terms of assembly, the cytochrome bc1 complex contains 11 subunits: 3 respiratory subunits (MT-CYB, CYC1 and UQCRFS1), 2 core proteins (UQCRC1 and UQCRC2) and 6 low-molecular weight proteins (UQCRH/QCR6, UQCRB/QCR7, UQCRQ/QCR8, UQCR10/QCR9, UQCR11/QCR10 and a cleavage product of UQCRFS1). This cytochrome bc1 complex then forms a dimer. Requires heme b as cofactor.

The protein localises to the mitochondrion inner membrane. Its function is as follows. Component of the ubiquinol-cytochrome c reductase complex (complex III or cytochrome b-c1 complex) that is part of the mitochondrial respiratory chain. The b-c1 complex mediates electron transfer from ubiquinol to cytochrome c. Contributes to the generation of a proton gradient across the mitochondrial membrane that is then used for ATP synthesis. The sequence is that of Cytochrome b (MT-CYB) from Sminthopsis youngsoni (Lesser hairy-footed dunnart).